Here is a 317-residue protein sequence, read N- to C-terminus: MSKVAVIGATGRVGSTAAARLALLDCVNEVTLIARPKSVDKLRGLRRDILDSLAAAQKDAEITIGCERDDYVDADVIVMTAGIPRKPGQTRLDLTKDNAAIIKKYLEGVAEENPEAIVLVVTNPVDVLTYVALKVSGLPKNRVIGLGTHLDSMRFKVLIAKHFNVHMSEVHTRIIGEHGDTMVPVISSTSVGGIPVTRMPGWEDFDVEEAVREVKEAGQRIIETWGGSQFGPAQAITNLVRTILQDERRVLTVSAYLDGEIDGIRDVCIGVPARLGREGVLEIVPIELEEDEMRAFRRSVKVVKEATREAMEAISER.

8–14 (GATGRVG) lines the NADP(+) pocket. Positions 85 and 91 each coordinate substrate. NADP(+)-binding positions include Asn-98 and 121–123 (VTN). Residues Asn-123 and Arg-154 each coordinate substrate. His-178 acts as the Proton acceptor in catalysis.

It belongs to the LDH/MDH superfamily.

The catalysed reaction is (S)-malate + NADP(+) = oxaloacetate + NADPH + H(+). The enzyme catalyses (S)-malate + NAD(+) = oxaloacetate + NADH + H(+). Its function is as follows. Catalyzes the reversible oxidation of malate to oxaloacetate. The sequence is that of Malate dehydrogenase (mdh) from Methanopyrus kandleri (strain AV19 / DSM 6324 / JCM 9639 / NBRC 100938).